Consider the following 313-residue polypeptide: LUC7-related splicing factor homolog (313 aa).

Residues 237–313 (RKEREEKLGS…RDRRDRDRRY (77 aa)) form a disordered region.

It belongs to the Luc7 family.

The polypeptide is LUC7-related splicing factor homolog (Caenorhabditis elegans).